The sequence spans 894 residues: DNA mismatch repair protein MutS (894 aa).

607-614 provides a ligand contact to ATP; sequence GPNMSGKS.

Belongs to the DNA mismatch repair MutS family.

Its function is as follows. This protein is involved in the repair of mismatches in DNA. It is possible that it carries out the mismatch recognition step. This protein has a weak ATPase activity. In Bacillus cereus (strain ZK / E33L), this protein is DNA mismatch repair protein MutS.